A 518-amino-acid polypeptide reads, in one-letter code: Probable high-affinity hexose transporter ght7 (518 aa).

At 1 to 27 (MRDFQSRFADRYNQITNSYSYSSSRQG) the chain is on the cytoplasmic side. Residues 28–48 (LITGMVNVGSFFGCLLSSPVA) traverse the membrane as a helical segment. Over 49 to 54 (DKIGKR) the chain is Extracellular. Residues 55-75 (LSIIVWTTVYLIGIIIQVTTV) form a helical membrane-spanning segment. At 76–77 (PS) the chain is on the cytoplasmic side. The chain crosses the membrane as a helical span at residues 78 to 98 (WVQILVAKIWTGLSIGALSVI). Topologically, residues 99–112 (TPGYQSEVAPAIMR) are extracellular. A helical transmembrane segment spans residues 113–133 (GAIVTTYQLFITLGIFIAACI). Residues 134–149 (NMGTHKYSHGTTAQWR) lie on the Cytoplasmic side of the membrane. Residues 150 to 170 (ISIGINLLWGIITLVGIIFLP) form a helical membrane-spanning segment. Over 171–236 (ESPRYLIAIG…IFNANIRYRT (66 aa)) the chain is Extracellular. Residues 237–257 (FLGMAVMMFQQLTGANYYFYY) traverse the membrane as a helical segment. Topologically, residues 258–271 (GTQVFRGTGMDSPY) are cytoplasmic. A helical transmembrane segment spans residues 272 to 292 (LAALIPDAVNCGCTFGAIFVL). The Extracellular segment spans residues 293-298 (EFFGRR). A helical membrane pass occupies residues 299–319 (SPLIVGGIWQYICFFIYAAVG). Residues 320-333 (DRALYHKNGTSNHR) lie on the Cytoplasmic side of the membrane. Residues 334–354 (AGAVMIVFSCLFIFSFSQTWA) traverse the membrane as a helical segment. Residues 355–374 (PAAYVIVGESYPVRYRSKCA) are Extracellular-facing. Residues 375–395 (AVATSANWFWNFLISFFTPFI) form a helical membrane-spanning segment. At 396–402 (TNSIGFK) the chain is on the cytoplasmic side. A helical transmembrane segment spans residues 403 to 423 (YGYIFASCNLTGAAIIFLFVH). Residues 424 to 518 (ETKGRTLEEI…IRPDKREPRL (95 aa)) are Extracellular-facing. Over residues 477–506 (IENTDNQGDSGSFQTSTPDDSRPEQNQASA) the composition is skewed to polar residues. The segment at 477–518 (IENTDNQGDSGSFQTSTPDDSRPEQNQASATYIRPDKREPRL) is disordered.

Belongs to the major facilitator superfamily. Sugar transporter (TC 2.A.1.1) family.

The protein resides in the membrane. This chain is Probable high-affinity hexose transporter ght7 (ght7), found in Schizosaccharomyces pombe (strain 972 / ATCC 24843) (Fission yeast).